The following is a 360-amino-acid chain: MAGNSIGQLFKVTTFGESHGIALGCIVDGVPPNMALSEADIQPDLDRRKPGTSRYTTPRREDDEVQILSGVFEGKTTGTSIGLIIKNADQRSKDYGDIADKFRPGHADYTYQQKYGIRDYRGGGRSSARETAMRVAAGAIAKKYLREQFGIEVRGYLSQIGNVKINPETVADISKIDWQQVASNPFFCPDPVAVEGFGELIRELKKDGDSIGAKLTVVAENVPVGLGEPVFDRLDADLAHALMSINAVKAVEIGDGFDVVEQRGSEHRDEMTPQGFVSNHAGGILGGISSGQPIIAHIALKPTSSIMVPGRSVNLNNEQVELITKGRHDPCVGIRAVPIAEAMTAIILLDHLLRFKAQCR.

NADP(+) contacts are provided by R48 and R54. FMN is bound by residues 125 to 127, 246 to 247, G286, 301 to 305, and R327; these read RSS, NA, and KPTSS.

The protein belongs to the chorismate synthase family. As to quaternary structure, homotetramer. FMNH2 is required as a cofactor.

It catalyses the reaction 5-O-(1-carboxyvinyl)-3-phosphoshikimate = chorismate + phosphate. It functions in the pathway metabolic intermediate biosynthesis; chorismate biosynthesis; chorismate from D-erythrose 4-phosphate and phosphoenolpyruvate: step 7/7. In terms of biological role, catalyzes the anti-1,4-elimination of the C-3 phosphate and the C-6 proR hydrogen from 5-enolpyruvylshikimate-3-phosphate (EPSP) to yield chorismate, which is the branch point compound that serves as the starting substrate for the three terminal pathways of aromatic amino acid biosynthesis. This reaction introduces a second double bond into the aromatic ring system. The polypeptide is Chorismate synthase (Actinobacillus pleuropneumoniae serotype 5b (strain L20)).